A 420-amino-acid chain; its full sequence is Serine hydroxymethyltransferase (420 aa).

(6S)-5,6,7,8-tetrahydrofolate contacts are provided by residues L121 and 125–127 (GHL). K230 carries the N6-(pyridoxal phosphate)lysine modification. (6S)-5,6,7,8-tetrahydrofolate contacts are provided by residues E246 and 354 to 356 (SPF).

This sequence belongs to the SHMT family. In terms of assembly, homodimer. The cofactor is pyridoxal 5'-phosphate.

Its subcellular location is the cytoplasm. It carries out the reaction (6R)-5,10-methylene-5,6,7,8-tetrahydrofolate + glycine + H2O = (6S)-5,6,7,8-tetrahydrofolate + L-serine. The protein operates within one-carbon metabolism; tetrahydrofolate interconversion. It participates in amino-acid biosynthesis; glycine biosynthesis; glycine from L-serine: step 1/1. Catalyzes the reversible interconversion of serine and glycine with tetrahydrofolate (THF) serving as the one-carbon carrier. This reaction serves as the major source of one-carbon groups required for the biosynthesis of purines, thymidylate, methionine, and other important biomolecules. Also exhibits THF-independent aldolase activity toward beta-hydroxyamino acids, producing glycine and aldehydes, via a retro-aldol mechanism. This is Serine hydroxymethyltransferase from Rickettsia rickettsii (strain Iowa).